A 570-amino-acid polypeptide reads, in one-letter code: 15-cis-phytoene desaturase, chloroplastic/chromoplastic (570 aa).

The N-terminal 91 residues, 1–91 (MSIVGLVSVV…AQLSASFRSS (91 aa)), are a transit peptide targeting the chloroplast and chromoplast. Residues 104–120 (GAGL…ADAG), A108, 127–128 (ES), K135, 152–153 (HI), and Y158 contribute to the FAD site. R293 is a substrate binding site. D524 provides a ligand contact to FAD. A532 provides a ligand contact to substrate. Residue M534 participates in FAD binding.

Belongs to the carotenoid/retinoid oxidoreductase family. In terms of assembly, homotetramer. The cofactor is FAD. Expressed more strongly in flowers than in leaves.

The protein resides in the plastid. The protein localises to the chloroplast. It is found in the chromoplast. Its subcellular location is the membrane. The catalysed reaction is 2 a plastoquinone + 15-cis-phytoene = 9,9',15-tri-cis-zeta-carotene + 2 a plastoquinol. It functions in the pathway carotenoid biosynthesis; lycopene biosynthesis. Its function is as follows. Converts phytoene into zeta-carotene via the intermediary of phytofluene by the symmetrical introduction of two double bonds at the C-11 and C-11' positions of phytoene with a concomitant isomerization of two neighboring double bonds at the C9 and C9' positions from trans to cis. This is 15-cis-phytoene desaturase, chloroplastic/chromoplastic (PDS1) from Narcissus pseudonarcissus (Daffodil).